The sequence spans 178 residues: uncharacterized protein (178 aa).

This is an uncharacterized protein from Rhizobium fredii (Sinorhizobium fredii).